Reading from the N-terminus, the 829-residue chain is MQCCTTPLSPHEQRLQDKIAGKEDSFRKSHERVFNILDSFDGKRPRIDVERAKLFTDSMKETEGQPLVLRWAKAMKHVAEHITVYIDDDQLICGRGGCPGRYGVLYPELDGDFLDLAIEDLPNRTESPFTITEADARVVVEEIAPYWKGKTYHEDLNLALPSDVHKLTYDDPQGLKSRFIVNETSSFRSSIQWVHDYEKVLKRGFRGLKEEAQEKIAGLDPLSPRDNVEKRPFLEAIVIVCDAIILWANRHAKLAADMAAAETNPVRKAELETMAEICAWVPENPARNFYEAVQAQWFTQMFSRLEQKTGTIVSNGRMDQYFWPFYRKDIEEGRITEESALELLECMWVGMAQYVDLYISPAGGAFNEGYAHWEAVTIGGQTPQGLDATNDLTYLFLKSKREFPLHYPDLAARIHSRSPERYLHDVAETIKFGSGFPKLINDEEIVPLYVSKGASFEEALDYAVSGCTEARMPNRDTYTSGGAYINFAAALEMVLYNGRMLKYGENELGLETGDPTRFETWEEFWNAYVLQHEHFLRAAFIQQHIINNVRARHFAQPMGSALHDLCMKHCLDLHTPQIPEGINLGYFEYMGFGTVVDSLAAIKKLVFEDKKLTMQEVIEALKCNFEGKEDVQQMLKSAPCYGNNDEYADSIAREIDAISVKYGRRYSPELGMHNDVRYVPFTSHVPFGKVVSATPNGRLAWTPLSDGSSASHGADVNGPTAVLQSNFSSKNYGYRDRAARMLNIKFTPKCVEGDEGTEKLVSFIRTFCDLKLWHVQFNVINRDTLIAAQKDPEKYRSLIVRIAGYSAYFVDLSPDLQNDLIARTQHDAM.

A PFL domain is found at 31-699 (ERVFNILDSF…VVSATPNGRL (669 aa)). 2-hydroxyethane-1-sulfonate-binding positions include Arg-188, Gln-192, 467 to 469 (CTE), and Arg-677. The active-site Cysteine radical intermediate is Cys-467. The active-site Proton acceptor is the Glu-469. The region spanning 706–829 (DGSSASHGAD…LIARTQHDAM (124 aa)) is the Glycine radical domain. At Gly-804 the chain carries Glycine radical.

The protein belongs to the glycyl radical enzyme (GRE) family. Homodimer. In terms of processing, requires the activating protein IslB to generate the key active site glycyl radical on Gly-804 that is involved in catalysis.

It carries out the reaction 2-hydroxyethane-1-sulfonate = acetaldehyde + sulfite + H(+). Its pathway is organosulfur degradation; alkanesulfonate degradation. In terms of biological role, involved in an anaerobic respiration pathway that converts the sulfonate isethionate (2-hydroxyethanesulfonate) to ammonia, acetate and sulfide. Catalyzes the radical-mediated C-S bond cleavage of isethionate (2-hydroxyethanesulfonate) to form sulfite and acetaldehyde. This chain is Isethionate sulfite-lyase, found in Oleidesulfovibrio alaskensis (strain ATCC BAA-1058 / DSM 17464 / G20) (Desulfovibrio alaskensis).